Consider the following 254-residue polypeptide: Segregation and condensation protein A (254 aa).

It belongs to the ScpA family. Component of a cohesin-like complex composed of ScpA, ScpB and the Smc homodimer, in which ScpA and ScpB bind to the head domain of Smc. The presence of the three proteins is required for the association of the complex with DNA.

The protein localises to the cytoplasm. Participates in chromosomal partition during cell division. May act via the formation of a condensin-like complex containing Smc and ScpB that pull DNA away from mid-cell into both cell halves. This Clostridium tetani (strain Massachusetts / E88) protein is Segregation and condensation protein A.